Reading from the N-terminus, the 371-residue chain is MGIIFYTTQMPNFEQNQVIAVGLSGGVDSSVAALVLKEKGYEVIGLFMQNWETDSKDPFCTAEQDLSDAKAIADHIGIPLYVVNFSKAYWNHVFQHCLDEFAQGRTPNPDVWCNREIKFKSLLDHAKKLGATHLATGHYACIQNENNEYRLLKSNDSHKDQSYFLHLLNQYQLANSVFPIGGYQKSEVRAIAKKRGFINHAKKDSTGICFIGERKFKDFLNEFLLAQPGNIETPEGKIIGKHDGIMFYTVGQRKGLHIGGRPDAGEAPWYVVDKDVKRNVLIVVQGYEHPLLYSQELTCTNLHWIRDTEPSFPLTCKAKTRCRQADQTCVITRLDNDHCHVQFEHPQRAITRGQSVVFYLGNECLGGGIIN.

ATP contacts are provided by residues 22-29 (GLSGGVDS) and M48. The tract at residues 108-110 (NPD) is interaction with target base in tRNA. C113 acts as the Nucleophile in catalysis. A disulfide bridge links C113 with C209. G137 serves as a coordination point for ATP. The tract at residues 159–161 (KDQ) is interaction with tRNA. C209 acts as the Cysteine persulfide intermediate in catalysis.

Belongs to the MnmA/TRMU family.

The protein localises to the cytoplasm. It carries out the reaction S-sulfanyl-L-cysteinyl-[protein] + uridine(34) in tRNA + AH2 + ATP = 2-thiouridine(34) in tRNA + L-cysteinyl-[protein] + A + AMP + diphosphate + H(+). Catalyzes the 2-thiolation of uridine at the wobble position (U34) of tRNA, leading to the formation of s(2)U34. In Coxiella burnetii (strain CbuK_Q154) (Coxiella burnetii (strain Q154)), this protein is tRNA-specific 2-thiouridylase MnmA.